The primary structure comprises 156 residues: Endoribonuclease YbeY (156 aa).

Positions 122, 126, and 132 each coordinate Zn(2+).

Belongs to the endoribonuclease YbeY family. It depends on Zn(2+) as a cofactor.

The protein localises to the cytoplasm. Single strand-specific metallo-endoribonuclease involved in late-stage 70S ribosome quality control and in maturation of the 3' terminus of the 16S rRNA. This Bacillus cereus (strain ZK / E33L) protein is Endoribonuclease YbeY.